A 394-amino-acid polypeptide reads, in one-letter code: Na(+)/H(+) antiporter NhaA (394 aa).

11 helical membrane-spanning segments follow: residues 14-34 (AGGL…NSAL), 59-79 (LLLW…GLEV), 95-115 (VFPA…YLLF), 125-145 (GWAI…ALLG), 154-174 (VFLL…IALF), 179-199 (VSLQ…YMNW), 213-233 (LVLW…GVIV), 254-274 (GLHP…NAGV), 292-312 (IATG…WLAV), 328-348 (IFAV…IASL), and 363-383 (LGIL…LRLV).

It belongs to the NhaA Na(+)/H(+) (TC 2.A.33) antiporter family.

It is found in the cell inner membrane. The enzyme catalyses Na(+)(in) + 2 H(+)(out) = Na(+)(out) + 2 H(+)(in). Its function is as follows. Na(+)/H(+) antiporter that extrudes sodium in exchange for external protons. The chain is Na(+)/H(+) antiporter NhaA from Yersinia pseudotuberculosis serotype IB (strain PB1/+).